The following is a 369-amino-acid chain: Methionine import ATP-binding protein MetN 1 (369 aa).

Residues 29–265 (IRLHGLGKRY…PRHAVTRSLL (237 aa)) form the ABC transporter domain. 62-69 (GRSGAGKS) contacts ATP.

The protein belongs to the ABC transporter superfamily. Methionine importer (TC 3.A.1.24) family. The complex is composed of two ATP-binding proteins (MetN), two transmembrane proteins (MetI) and a solute-binding protein (MetQ).

It is found in the cell inner membrane. The enzyme catalyses L-methionine(out) + ATP + H2O = L-methionine(in) + ADP + phosphate + H(+). It catalyses the reaction D-methionine(out) + ATP + H2O = D-methionine(in) + ADP + phosphate + H(+). Its function is as follows. Part of the ABC transporter complex MetNIQ involved in methionine import. Responsible for energy coupling to the transport system. This is Methionine import ATP-binding protein MetN 1 from Pseudomonas aeruginosa (strain ATCC 15692 / DSM 22644 / CIP 104116 / JCM 14847 / LMG 12228 / 1C / PRS 101 / PAO1).